An 82-amino-acid chain; its full sequence is ATP synthase subunit c, chloroplastic (82 aa).

The next 2 helical transmembrane spans lie at 4–24 (IISA…AIGP) and 57–77 (LAFM…LLFA).

It belongs to the ATPase C chain family. In terms of assembly, F-type ATPases have 2 components, F(1) - the catalytic core - and F(0) - the membrane proton channel. F(1) has five subunits: alpha(3), beta(3), gamma(1), delta(1), epsilon(1). F(0) has four main subunits: a(1), b(1), b'(1) and c(10-14). The alpha and beta chains form an alternating ring which encloses part of the gamma chain. F(1) is attached to F(0) by a central stalk formed by the gamma and epsilon chains, while a peripheral stalk is formed by the delta, b and b' chains.

The protein localises to the plastid. It localises to the chloroplast thylakoid membrane. Its function is as follows. F(1)F(0) ATP synthase produces ATP from ADP in the presence of a proton or sodium gradient. F-type ATPases consist of two structural domains, F(1) containing the extramembraneous catalytic core and F(0) containing the membrane proton channel, linked together by a central stalk and a peripheral stalk. During catalysis, ATP synthesis in the catalytic domain of F(1) is coupled via a rotary mechanism of the central stalk subunits to proton translocation. Key component of the F(0) channel; it plays a direct role in translocation across the membrane. A homomeric c-ring of between 10-14 subunits forms the central stalk rotor element with the F(1) delta and epsilon subunits. The polypeptide is ATP synthase subunit c, chloroplastic (Trieres chinensis (Marine centric diatom)).